A 485-amino-acid chain; its full sequence is Homospermidine synthase (485 aa).

This sequence belongs to the saccharopine dehydrogenase family. Requires NAD(+) as cofactor.

The enzyme catalyses 2 putrescine = sym-homospermidine + NH4(+). It carries out the reaction putrescine + spermidine = sym-homospermidine + propane-1,3-diamine. In terms of biological role, involved in the NAD(+)-dependent synthesis of the polyamine homospermidine from putrescine. In Mesorhizobium japonicum (strain LMG 29417 / CECT 9101 / MAFF 303099) (Mesorhizobium loti (strain MAFF 303099)), this protein is Homospermidine synthase (hss).